Here is a 385-residue protein sequence, read N- to C-terminus: Probable thioesterase PNKD (385 aa).

The tract at residues 32–58 (KASHNRTRALQSHSSPEGKEEPEPLSP) is disordered. 7 residues coordinate Zn(2+): histidine 172, histidine 174, aspartate 176, histidine 177, histidine 229, aspartate 253, and histidine 291.

This sequence belongs to the metallo-beta-lactamase superfamily. Glyoxalase II family. Isoform 2 interacts with the sarcomeric proteins, MRLC2, MYOM1 and ENO3. The cofactor is Zn(2+). In terms of processing, undergoes cleavage at the N-terminus. In terms of tissue distribution, isoform 1 is only expressed in the brain. Isoform 2 is ubiquitously detected with highest expression in skeletal muscle and detected in myocardial myofibrils.

The protein resides in the cell membrane. The protein localises to the mitochondrion. It is found in the cytoplasm. Its subcellular location is the golgi apparatus. It localises to the endoplasmic reticulum. The enzyme catalyses a thioester + H2O = a thiol + a carboxylate + H(+). Functionally, probable thioesterase that may play a role in cellular detoxification processes; it likely acts on a yet-unknown alpha-hydroxythioester substrate. In vitro, it is able to catalyze the hydrolysis of S-D-lactoyl-glutathione to form glutathione and D-lactic acid at very low rate, though this reaction is not physiologically relevant in vivo. The polypeptide is Probable thioesterase PNKD (PNKD) (Homo sapiens (Human)).